Consider the following 953-residue polypeptide: Lysosomal alpha-glucosidase (953 aa).

The signal sequence occupies residues 1–27; the sequence is MNIRKPLCSNSVVGACTLISLTTAVIL. Positions 28-69 are excised as a propeptide; it reads GHLMLRELMLLPQDLHESSSGLWKTYRPHHQEGYKPGPLHIQ. Residues 80–131 enclose the P-type domain; the sequence is TQCDVPPSSRFDCAPDKGISQEQCEARGCCYVPAGQVLKEPQIGQPWCFFPP. Cystine bridges form between C82–C109, C92–C108, and C103–C127. Residues N140, N233, and N390 are each glycosylated (N-linked (GlcNAc...) asparagine). Substrate is bound at residue D404. N-linked (GlcNAc...) asparagine glycosylation occurs at N470. The active-site Nucleophile is the D518. The active site involves E521. A disulfide bond links C533 and C558. Positions 600 and 616 each coordinate substrate. A disulfide bond links C647 and C658. Residue H674 coordinates substrate. 3 N-linked (GlcNAc...) asparagine glycosylation sites follow: N883, N926, and N933.

Belongs to the glycosyl hydrolase 31 family.

The protein resides in the lysosome. It localises to the lysosome membrane. It carries out the reaction Hydrolysis of terminal, non-reducing (1-&gt;4)-linked alpha-D-glucose residues with release of alpha-D-glucose.. In terms of biological role, essential for the degradation of glycogen in lysosomes. Has highest activity on alpha-1,4-linked glycosidic linkages, but can also hydrolyze alpha-1,6-linked glucans. In Mus musculus (Mouse), this protein is Lysosomal alpha-glucosidase (Gaa).